We begin with the raw amino-acid sequence, 225 residues long: Octanoyltransferase (225 aa).

One can recognise a BPL/LPL catalytic domain in the interval 42–219 (KNRQASMIFC…SICSALEYIN (178 aa)). Substrate is bound by residues 79-86 (RGGKITWH), 149-151 (AIG), and 162-164 (GFA). Cys-180 (acyl-thioester intermediate) is an active-site residue.

This sequence belongs to the LipB family.

The protein localises to the cytoplasm. It catalyses the reaction octanoyl-[ACP] + L-lysyl-[protein] = N(6)-octanoyl-L-lysyl-[protein] + holo-[ACP] + H(+). Its pathway is protein modification; protein lipoylation via endogenous pathway; protein N(6)-(lipoyl)lysine from octanoyl-[acyl-carrier-protein]: step 1/2. Its function is as follows. Catalyzes the transfer of endogenously produced octanoic acid from octanoyl-acyl-carrier-protein onto the lipoyl domains of lipoate-dependent enzymes. Lipoyl-ACP can also act as a substrate although octanoyl-ACP is likely to be the physiological substrate. This chain is Octanoyltransferase, found in Tropheryma whipplei (strain TW08/27) (Whipple's bacillus).